A 383-amino-acid polypeptide reads, in one-letter code: Na(+)/H(+) antiporter NhaA (383 aa).

The next 11 membrane-spanning stretches (helical) occupy residues 14–34 (AGGI…NSPL), 47–67 (FGMS…FLLI), 87–107 (IFPA…YVAF), 117–137 (GWAI…ALLG), 146–166 (VFLL…IALF), 171–191 (LSTM…MLNA), 205–225 (AILW…GVVI), 252–272 (VAFG…LEGV), 280–300 (MLPL…IFTF), 321–341 (IFAV…ISSL), and 356–376 (LGIL…LHFS).

This sequence belongs to the NhaA Na(+)/H(+) (TC 2.A.33) antiporter family.

It localises to the cell inner membrane. It carries out the reaction Na(+)(in) + 2 H(+)(out) = Na(+)(out) + 2 H(+)(in). Na(+)/H(+) antiporter that extrudes sodium in exchange for external protons. The polypeptide is Na(+)/H(+) antiporter NhaA (Vibrio alginolyticus).